A 521-amino-acid polypeptide reads, in one-letter code: Fucosyltransferase 3 (521 aa).

Basic and acidic residues predominate over residues 1–12 (MKRGKKNSDAGD). Residues 1–29 (MKRGKKNSDAGDRLTNSDTRTGSSELNAM) form a disordered region. Topologically, residues 1–39 (MKRGKKNSDAGDRLTNSDTRTGSSELNAMMKPSLSSMKT) are cytoplasmic. Residues 14-26 (LTNSDTRTGSSEL) show a composition bias toward polar residues. Residues 40-60 (MGLLLAVLMVASVMFSLSVVL) traverse the membrane as a helical; Signal-anchor for type II membrane protein segment. At 61 to 521 (RDPPSDDVIE…QATLFHGCKD (461 aa)) the chain is on the lumenal side. 3 N-linked (GlcNAc...) asparagine glycosylation sites follow: asparagine 152, asparagine 222, and asparagine 493.

This sequence belongs to the glycosyltransferase 37 family. In terms of tissue distribution, expressed in roots, stems, leaves, flowers, siliques and seedlings.

It localises to the golgi apparatus. The protein localises to the golgi stack membrane. Its pathway is protein modification; protein glycosylation. In terms of biological role, may be involved in cell wall biosynthesis. May act as a fucosyltransferase. The sequence is that of Fucosyltransferase 3 (FUT3) from Arabidopsis thaliana (Mouse-ear cress).